The following is a 187-amino-acid chain: Elongation factor P (187 aa).

Belongs to the elongation factor P family.

It is found in the cytoplasm. It participates in protein biosynthesis; polypeptide chain elongation. Functionally, involved in peptide bond synthesis. Stimulates efficient translation and peptide-bond synthesis on native or reconstituted 70S ribosomes in vitro. Probably functions indirectly by altering the affinity of the ribosome for aminoacyl-tRNA, thus increasing their reactivity as acceptors for peptidyl transferase. The protein is Elongation factor P of Helicobacter hepaticus (strain ATCC 51449 / 3B1).